A 228-amino-acid polypeptide reads, in one-letter code: Ribonuclease HII (228 aa).

The 210-residue stretch at 1–210 (MKIAGIDEAG…LKKIAEKVES (210 aa)) folds into the RNase H type-2 domain. Positions 7, 8, and 105 each coordinate a divalent metal cation.

It belongs to the RNase HII family. In terms of assembly, monomer. It depends on Mn(2+) as a cofactor. The cofactor is Mg(2+).

Its subcellular location is the cytoplasm. It catalyses the reaction Endonucleolytic cleavage to 5'-phosphomonoester.. Functionally, endonuclease that specifically degrades the RNA of RNA-DNA hybrids. The polypeptide is Ribonuclease HII (rnhB) (Thermococcus kodakarensis (strain ATCC BAA-918 / JCM 12380 / KOD1) (Pyrococcus kodakaraensis (strain KOD1))).